Here is a 197-residue protein sequence, read N- to C-terminus: Fucoxanthin-chlorophyll a-c binding protein C, chloroplastic (197 aa).

The transit peptide at 1–31 directs the protein to the chloroplast; the sequence is MKTAVIASLIAGAAAFAPAKNAARTSVATNM. A run of 3 helical transmembrane segments spans residues 73-94, 113-133, and 174-196; these read ISML…PGTI, IPAG…SSVM, and GRAA…SLLP.

The protein belongs to the fucoxanthin chlorophyll protein family. The LHC complex of chromophytic algae is composed of fucoxanthin, chlorophyll A and C bound non-covalently by fucoxanthin chlorophyll proteins (FCPs). The ratio of the pigments in LHC; fucoxanthin: chlorophyll C: chlorophyll A; (0.6-1): (0.1-0.3): (1).

Its subcellular location is the plastid. The protein localises to the chloroplast thylakoid membrane. Its function is as follows. The light-harvesting complex (LHC) functions as a light receptor, it captures and delivers excitation energy to photosystems with which it is closely associated. Energy is transferred from the carotenoid and chlorophyll C (or B) to chlorophyll A and the photosynthetic reaction centers where it is used to synthesize ATP and reducing power. The sequence is that of Fucoxanthin-chlorophyll a-c binding protein C, chloroplastic (FCPC) from Phaeodactylum tricornutum (Diatom).